A 350-amino-acid polypeptide reads, in one-letter code: Biotin synthase (350 aa).

In terms of domain architecture, Radical SAM core spans 54-278 (REIQLSTLLS…TMPQSYVRLS (225 aa)). Residues Cys69, Cys73, and Cys76 each coordinate [4Fe-4S] cluster. Residues Cys113, Cys144, Cys204, and Arg276 each coordinate [2Fe-2S] cluster.

Belongs to the radical SAM superfamily. Biotin synthase family. In terms of assembly, homodimer. The cofactor is [4Fe-4S] cluster. [2Fe-2S] cluster serves as cofactor.

The catalysed reaction is (4R,5S)-dethiobiotin + (sulfur carrier)-SH + 2 reduced [2Fe-2S]-[ferredoxin] + 2 S-adenosyl-L-methionine = (sulfur carrier)-H + biotin + 2 5'-deoxyadenosine + 2 L-methionine + 2 oxidized [2Fe-2S]-[ferredoxin]. Its pathway is cofactor biosynthesis; biotin biosynthesis; biotin from 7,8-diaminononanoate: step 2/2. Functionally, catalyzes the conversion of dethiobiotin (DTB) to biotin by the insertion of a sulfur atom into dethiobiotin via a radical-based mechanism. The protein is Biotin synthase of Neisseria meningitidis serogroup C (strain 053442).